Reading from the N-terminus, the 171-residue chain is 3-hydroxydecanoyl-[acyl-carrier-protein] dehydratase (171 aa).

Residue His70 is part of the active site.

This sequence belongs to the thioester dehydratase family. FabA subfamily. As to quaternary structure, homodimer.

It localises to the cytoplasm. It carries out the reaction a (3R)-hydroxyacyl-[ACP] = a (2E)-enoyl-[ACP] + H2O. It catalyses the reaction (3R)-hydroxydecanoyl-[ACP] = (2E)-decenoyl-[ACP] + H2O. The enzyme catalyses (2E)-decenoyl-[ACP] = (3Z)-decenoyl-[ACP]. It functions in the pathway lipid metabolism; fatty acid biosynthesis. Necessary for the introduction of cis unsaturation into fatty acids. Catalyzes the dehydration of (3R)-3-hydroxydecanoyl-ACP to E-(2)-decenoyl-ACP and then its isomerization to Z-(3)-decenoyl-ACP. Can catalyze the dehydratase reaction for beta-hydroxyacyl-ACPs with saturated chain lengths up to 16:0, being most active on intermediate chain length. This chain is 3-hydroxydecanoyl-[acyl-carrier-protein] dehydratase, found in Shewanella woodyi (strain ATCC 51908 / MS32).